Consider the following 209-residue polypeptide: Glutathione S-transferase 1-1 (209 aa).

One can recognise a GST N-terminal domain in the interval 1-81; the sequence is MADFYYLPGS…YLVEKYGKTD (81 aa). Residues serine 10, 51 to 53, and 65 to 67 each bind glutathione; these read HTI and ESR. The 123-residue stretch at 87–209 folds into the GST C-terminal domain; it reads CPKKRAVINQ…GCLEFKKFFE (123 aa).

This sequence belongs to the GST superfamily. Theta family. As to quaternary structure, homodimer.

It catalyses the reaction RX + glutathione = an S-substituted glutathione + a halide anion + H(+). The enzyme catalyses 1,1,1-trichloro-2,2-bis(4-chlorophenyl)ethane = 1,1-dichloro-2,2-bis(4-chlorophenyl)ethylene + chloride + H(+). Its function is as follows. Conjugation of reduced glutathione to a wide number of exogenous and endogenous hydrophobic electrophiles. Has DDT dehydrochlorinase activity. The protein is Glutathione S-transferase 1-1 (GstD1) of Drosophila sechellia (Fruit fly).